The primary structure comprises 111 residues: WAP four-disulfide core domain protein 12 (111 aa).

Residues 1-23 form the signal peptide; it reads MGSSSFLVLMVSLTLVTLVAAEG. The 48-residue stretch at 27-74 folds into the WAP domain; that stretch reads GIEKAGVCPADNVRCFKSDPPQCHTDQDCLGERKCCYLHCGFKCVIPV. 4 disulfide bridges follow: C34–C62, C41–C66, C49–C61, and C55–C70. Residues 80–111 form a disordered region; that stretch reads GGNKDEDVSGPCPEPGWEAKSPGSSSTGCPQK. Residues 101–111 are compositionally biased toward polar residues; sequence PGSSSTGCPQK.

It localises to the secreted. Antibacterial protein. Putative acid-stable proteinase inhibitor. This is WAP four-disulfide core domain protein 12 (WFDC12) from Chlorocebus aethiops (Green monkey).